The primary structure comprises 957 residues: Bifunctional glutamine synthetase adenylyltransferase/adenylyl-removing enzyme (957 aa).

An adenylyl removase region spans residues M1 to E447. The interval V454–E957 is adenylyl transferase.

The protein belongs to the GlnE family. Mg(2+) serves as cofactor.

The catalysed reaction is [glutamine synthetase]-O(4)-(5'-adenylyl)-L-tyrosine + phosphate = [glutamine synthetase]-L-tyrosine + ADP. It carries out the reaction [glutamine synthetase]-L-tyrosine + ATP = [glutamine synthetase]-O(4)-(5'-adenylyl)-L-tyrosine + diphosphate. Involved in the regulation of glutamine synthetase GlnA, a key enzyme in the process to assimilate ammonia. When cellular nitrogen levels are high, the C-terminal adenylyl transferase (AT) inactivates GlnA by covalent transfer of an adenylyl group from ATP to specific tyrosine residue of GlnA, thus reducing its activity. Conversely, when nitrogen levels are low, the N-terminal adenylyl removase (AR) activates GlnA by removing the adenylyl group by phosphorolysis, increasing its activity. The regulatory region of GlnE binds the signal transduction protein PII (GlnB) which indicates the nitrogen status of the cell. The polypeptide is Bifunctional glutamine synthetase adenylyltransferase/adenylyl-removing enzyme (Haemophilus ducreyi (strain 35000HP / ATCC 700724)).